Here is a 64-residue protein sequence, read N- to C-terminus: Large ribosomal subunit protein bL32 (64 aa).

Basic residues predominate over residues 1–15; that stretch reads MAVPKRKVSKSRRDS. The interval 1-21 is disordered; that stretch reads MAVPKRKVSKSRRDSRRAQTF.

It belongs to the bacterial ribosomal protein bL32 family.

The protein is Large ribosomal subunit protein bL32 of Symbiobacterium thermophilum (strain DSM 24528 / JCM 14929 / IAM 14863 / T).